Here is a 1250-residue protein sequence, read N- to C-terminus: DNA-directed RNA polymerase subunit beta (1250 aa).

The tract at residues 1139–1226 (GGAELAKPAP…DLFDEGDEDL (88 aa)) is disordered. Acidic residues-rich tracts occupy residues 1155–1183 (ESGEAGEESEGEPEEEDVEEIDVPLDPEE) and 1207–1226 (ADDDQEMDEEDLFDEGDEDL).

Belongs to the RNA polymerase beta chain family. In terms of assembly, the RNAP catalytic core consists of 2 alpha, 1 beta, 1 beta' and 1 omega subunit. When a sigma factor is associated with the core the holoenzyme is formed, which can initiate transcription.

The enzyme catalyses RNA(n) + a ribonucleoside 5'-triphosphate = RNA(n+1) + diphosphate. In terms of biological role, DNA-dependent RNA polymerase catalyzes the transcription of DNA into RNA using the four ribonucleoside triphosphates as substrates. The protein is DNA-directed RNA polymerase subunit beta of Symbiobacterium thermophilum (strain DSM 24528 / JCM 14929 / IAM 14863 / T).